A 406-amino-acid chain; its full sequence is Mitochondrial ribosome-associated GTPase 2 (406 aa).

The segment at 15–406 (FEGVGHWALS…LGQGRQPLRW (392 aa)) is localized in the mitochondria. Residues 30–406 (KPSRLLPQQA…LGQGRQPLRW (377 aa)) form a not localized in the mitochondria region. Residues 70-224 (RYFVDYRRVL…RVLHLELKTV (155 aa)) form the Obg domain. In terms of domain architecture, OBG-type G spans 225–390 (AHAGMVGFPN…LLLHLKVLYD (166 aa)). GTP-binding positions include 231–238 (GFPNAGKS), 256–260 (FTTLK), 278–281 (DIPG), 345–348 (NKID), and 371–373 (SAL). Serine 238 and threonine 258 together coordinate Mg(2+).

This sequence belongs to the TRAFAC class OBG-HflX-like GTPase superfamily. OBG GTPase family. Associates with the mitochondrial ribosome large subunit; the association occurs in a GTP-dependent manner. Mg(2+) serves as cofactor.

The protein localises to the mitochondrion. It localises to the mitochondrion inner membrane. Its function is as follows. Plays a role in the regulation of the mitochondrial ribosome assembly and of translational activity. Displays GTPase activity. Involved in the ribosome maturation process. The protein is Mitochondrial ribosome-associated GTPase 2 (MTG2) of Pongo abelii (Sumatran orangutan).